The primary structure comprises 61 residues: Small ribosomal subunit protein uS14 (61 aa).

Zn(2+) contacts are provided by Cys-24, Cys-27, Cys-40, and Cys-43.

Belongs to the universal ribosomal protein uS14 family. Zinc-binding uS14 subfamily. As to quaternary structure, part of the 30S ribosomal subunit. Contacts proteins S3 and S10. It depends on Zn(2+) as a cofactor.

In terms of biological role, binds 16S rRNA, required for the assembly of 30S particles and may also be responsible for determining the conformation of the 16S rRNA at the A site. This chain is Small ribosomal subunit protein uS14, found in Clostridium acetobutylicum (strain ATCC 824 / DSM 792 / JCM 1419 / IAM 19013 / LMG 5710 / NBRC 13948 / NRRL B-527 / VKM B-1787 / 2291 / W).